We begin with the raw amino-acid sequence, 121 residues long: Pro-glucagon (121 aa).

An N-terminal signal peptide occupies residues Met1 to Cys21. Residues Ser80–Ala85 constitute a propeptide that is removed on maturation.

It belongs to the glucagon family.

The protein localises to the secreted. Plays a key role in glucose metabolism and homeostasis. Regulates blood glucose by increasing gluconeogenesis and decreasing glycolysis. The protein is Pro-glucagon (gcg) of Carassius auratus (Goldfish).